Consider the following 382-residue polypeptide: Flap endonuclease 1-B (382 aa).

The tract at residues 1–104 (MGIHGLAKLI…GELAKRSERR (104 aa)) is N-domain. Aspartate 34 serves as a coordination point for Mg(2+). The DNA site is built by arginine 47 and arginine 70. Positions 86, 158, 160, 179, and 181 each coordinate Mg(2+). The tract at residues 122–253 (NIEKFNKRLV…KRAIDLIRQH (132 aa)) is I-domain. A DNA-binding site is contributed by glutamate 158. Residues glycine 231 and aspartate 233 each coordinate DNA. Aspartate 233 contributes to the Mg(2+) binding site. An interaction with PCNA region spans residues 336 to 344 (TQGRLDDFF). Positions 352–382 (STKRKEVESKGSTKKKSKTGGTPAGKFKRGK) are disordered.

The protein belongs to the XPG/RAD2 endonuclease family. FEN1 subfamily. As to quaternary structure, interacts with PCNA. Three molecules of fen1 bind to one PCNA trimer with each molecule binding to one PCNA monomer. PCNA stimulates the nuclease activity without altering cleavage specificity. It depends on Mg(2+) as a cofactor. Phosphorylated. Phosphorylation upon DNA damage induces relocalization to the nuclear plasma.

It localises to the nucleus. It is found in the nucleolus. Its subcellular location is the nucleoplasm. The protein resides in the mitochondrion. Structure-specific nuclease with 5'-flap endonuclease and 5'-3' exonuclease activities involved in DNA replication and repair. During DNA replication, cleaves the 5'-overhanging flap structure that is generated by displacement synthesis when DNA polymerase encounters the 5'-end of a downstream Okazaki fragment. It enters the flap from the 5'-end and then tracks to cleave the flap base, leaving a nick for ligation. Also involved in the long patch base excision repair (LP-BER) pathway, by cleaving within the apurinic/apyrimidinic (AP) site-terminated flap. Acts as a genome stabilization factor that prevents flaps from equilibrating into structures that lead to duplications and deletions. Also possesses 5'-3' exonuclease activity on nicked or gapped double-stranded DNA, and exhibits RNase H activity. Also involved in replication and repair of rDNA and in repairing mitochondrial DNA. This Xenopus laevis (African clawed frog) protein is Flap endonuclease 1-B (fen1-b).